The primary structure comprises 438 residues: Coenzyme A disulfide reductase (438 aa).

Gly-8 to Glu-33 contacts FAD. Substrate is bound by residues Thr-15, Gln-19, Arg-22, Ser-39, and Asn-42. Catalysis depends on Cys-43, which acts as the Nucleophile. Cys-43 functions as the Redox-active in the catalytic mechanism. Residue Lys-71 participates in substrate binding. Val-151–Asn-166 provides a ligand contact to NADP(+). Residue Thr-267–Asp-277 coordinates FAD. His-299 is a substrate binding site. FAD is bound at residue Tyr-419. Lys-427 lines the substrate pocket.

It belongs to the class-III pyridine nucleotide-disulfide oxidoreductase family. As to quaternary structure, homodimer. It depends on FAD as a cofactor.

The enzyme catalyses NADP(+) + 2 CoA = CoA-disulfide + NADPH + H(+). Functionally, catalyzes specifically the NADPH-dependent reduction of coenzyme A disulfide. The chain is Coenzyme A disulfide reductase from Staphylococcus aureus (strain bovine RF122 / ET3-1).